The primary structure comprises 266 residues: MKLSLSPPPYADAPVVVLISGLGGSGSYWLPQLAVLEQEYQVVCYDQRGTGNNPDTLAEDYSITQMAAELHQALVAAGIEHYAVVGHALGALVGMQLALDHPASVTVLVCVNGWLRINAHTRRCFQVRERLLYSGGAQAWVEAQPLFLYPADWMAARAPRLEAEDALALAHFQGKNNLLRRLNALKRADFSHHADRIRCPVQIICASDDLLVPSACSSELHAALPDSQKMVMRYGGHACNVTDPETFNALLLNGLASLLHHREAAL.

This sequence belongs to the AB hydrolase superfamily. Hydrolase RutD family.

The catalysed reaction is carbamate + 2 H(+) = NH4(+) + CO2. Functionally, involved in pyrimidine catabolism. May facilitate the hydrolysis of carbamate, a reaction that can also occur spontaneously. This chain is Putative carbamate hydrolase RutD, found in Escherichia coli O157:H7.